The chain runs to 396 residues: Calreticulin (396 aa).

A signal peptide spans 1-15 (MKSLCLLAIVAVVSA). An intrachain disulfide couples Cys-101 to Cys-133. The an alpha-D-glucoside site is built by Tyr-105, Lys-107, Tyr-124, and Asp-131. 7 tandem repeats follow at residues 186–197 (AQTGSLEEDWDL), 205–216 (DPDAKKPEDWDE), 222–233 (DAEDVKPEDWEK), 239–250 (DPDAKKPEDWDD), 254–264 (GEWEPPMIDNP), 268–278 (GEWKPKQIKNP), and 282–292 (GKWIHPEIENP). The interval 186-250 (AQTGSLEEDW…DAKKPEDWDD (65 aa)) is 4 X approximate repeats. Residues 193-301 (EDWDLLPAKK…PEYTPDDELY (109 aa)) form a P-domain region. The span at 202–212 (KIKDPDAKKPE) shows a compositional bias: basic and acidic residues. The segment at 202–250 (KIKDPDAKKPEDWDEREYIDDAEDVKPEDWEKPEHIPDPDAKKPEDWDD) is disordered. The span at 213–224 (DWDEREYIDDAE) shows a compositional bias: acidic residues. A compositionally biased stretch (basic and acidic residues) spans 225-246 (DVKPEDWEKPEHIPDPDAKKPE). The tract at residues 254 to 292 (GEWEPPMIDNPEYKGEWKPKQIKNPAYKGKWIHPEIENP) is 3 X approximate repeats. The C-domain stretch occupies residues 302 to 396 (LYENWGAIGF…KEEEEGHDEL (95 aa)). Asp-312 is an an alpha-D-glucoside binding site. The segment covering 342 to 380 (FDKLKTVEKEKKEKADEEARKVEEEARKKAEEEKEAKKD) has biased composition (basic and acidic residues). Positions 342–396 (FDKLKTVEKEKKEKADEEARKVEEEARKKAEEEKEAKKDDDEEEEKEEEEGHDEL) are disordered. The span at 381 to 396 (DDEEEEKEEEEGHDEL) shows a compositional bias: acidic residues. A Prevents secretion from ER motif is present at residues 393–396 (HDEL).

The protein belongs to the calreticulin family.

The protein resides in the endoplasmic reticulum lumen. In terms of biological role, molecular calcium-binding chaperone promoting folding, oligomeric assembly and quality control in the ER via the calreticulin/calnexin cycle. This lectin may interact transiently with almost all of the monoglucosylated glycoproteins that are synthesized in the ER. Probably by controlling the folding of extracellular matrix protein unc-52/Perlecan, may play a role in the formation of fibrous organelles, a hemidesmosome-like structure attaching muscles to the epidermis. Protects dopaminergic neurons against oxidative stress-induced neurodegeneration. The chain is Calreticulin (crt-1) from Caenorhabditis briggsae.